We begin with the raw amino-acid sequence, 416 residues long: PTS system N-acetylglucosamine-specific EIIC component (416 aa).

The 391-residue stretch at 16 to 406 (SGLFQGLQKV…FNLKTPGREP (391 aa)) folds into the PTS EIIC type-1 domain. 10 consecutive transmembrane segments (helical) span residues 68–88 (AGGA…AIGF), 96–116 (TALA…AFPV), 130–150 (TYND…AVLW), 170–190 (LVPI…GLVW), 196–216 (GISN…ALFG), 266–286 (IFQA…ALAM), 298–318 (VLGM…TEPI), 323–343 (MFIA…SMAI), 344–364 (TWGL…DYAL), and 375–395 (IIPI…FAIV).

The protein resides in the cell membrane. Functionally, the phosphoenolpyruvate-dependent sugar phosphotransferase system (sugar PTS), a major carbohydrate active transport system, catalyzes the phosphorylation of incoming sugar substrates concomitantly with their translocation across the cell membrane. This system is involved in N-acetylglucosamine (GlcNAc) transport. High-affinity permease, which exhibits a narrow specificity for GlcNAc. Essential for C-signaling between vegetative growth and development. This chain is PTS system N-acetylglucosamine-specific EIIC component, found in Streptomyces coelicolor (strain ATCC BAA-471 / A3(2) / M145).